A 1009-amino-acid chain; its full sequence is Delphilin (1009 aa).

Disordered regions lie at residues 28-82 (CRSK…SNTM), 170-193 (EGPVDYPQSDSEPEETPSAPRSRS), 322-369 (ASPD…SRDT), 414-635 (ELSS…SDNN), and 990-1009 (SETQGTENPKSPRIASPLAW). A compositionally biased stretch (basic and acidic residues) spans 44–53 (RSQDHHERPQ). The region spanning 95–172 (TIRVYRGKKS…MPSLVVEEGP (78 aa)) is the PDZ domain. A compositionally biased stretch (polar residues) spans 322–332 (ASPDSVDSNPY). Low complexity-rich tracts occupy residues 334–352 (SLDSPPASPLPSDELSPLP) and 427–439 (DDSTSVSYSSGSD). Pro residues-rich tracts occupy residues 441-455 (IPPPPQSPPPPPPPL), 462-477 (SPLPITPEHLPQPPPA), and 484-493 (IAPPPPPPRP). Positions 521-535 (SSPQPSSQPILQLHQ) are enriched in low complexity. The segment covering 557–602 (AQHTRLQHPSQSIYQSQQTTVPRTSPSLTKQKSLHSQPSQQSFEGT) has biased composition (polar residues). Pro residues predominate over residues 607–628 (VPPPPPPPLPPPCDPPPLPKPS). Residues 629 to 1009 (PKASDNNHMS…SPRIASPLAW (381 aa)) form the FH2 domain.

The protein localises to the postsynaptic cell membrane. Functionally, postsynaptic scaffolding protein. In Danio rerio (Zebrafish), this protein is Delphilin (grid2ip).